A 301-amino-acid polypeptide reads, in one-letter code: Tetrapeptide repeat homeobox protein 2 (301 aa).

Disordered regions lie at residues 1-27 (MQDP…RTVY) and 273-301 (SLST…LLDL). Basic and acidic residues-rich tracts occupy residues 16–26 (PPRRQRQERTV) and 281–292 (YKEEDGFVDKNH). The segment at residues 20-79 (QRQERTVYTESQQKVLEFYFQKDQYPNYDQRLNLAEMLSLREQQLQVWFKNRRAKLARER) is a DNA-binding region (homeobox).

Belongs to the paired homeobox family.

It localises to the nucleus. Transcription factor expressed after fertilization required for zygotic genome activation (ZGA), a critical event in early embryonic development during which the developmental control passes from maternally provided mRNAs to the expression of the zygotic genome after fertilization. Binds and activates expression of key ZGA marker genes, such as NANOGNB, ZSCAN4, DUXB, KLF5 and DPPA3. Binds to regulatory DNA sequences containing a 5'-TAATCC-3' sequence motif. The chain is Tetrapeptide repeat homeobox protein 2 from Homo sapiens (Human).